The chain runs to 524 residues: MGIVINLFLLVPASIVFFAAGFFLGRFFLERLGTTKVLEAEERAVQIVQEAQKEANEYKDLKVTEVNQEWKKKRREFDQEVVIKNNKFNQMQKQVQQREGQLKKQAQDNRDMERRLQDQRKENEQVQESVTLRAAELERIISEQNERLESISGLQSEDARQMLIDNMISKAREEATETIHQIHEEAEQEAERLAEKTLLTAIQRITFEQATENALSVVHIQTDELKGRIIGREGRNIKAFENATGVDIIVDDTPEVVILSCFDPLRRELAKLTLQKLLSEGVIHPVAIEKAYEDASKEIADVIMSAGEDALSSLQLPDMPAEVVKTVGKMKFHTVYGQNLLQHSREVAMLAGVMATELKLDARLAKRAGLLHDIGLVLPATDEPHAISGRNFLKRFNESGVVLNAIAAHHGEVEKESPIAELVDAANVISLSRPGARGAMTADGNVKRLESLEEIAKGFPGVIKTYALQAGREIRVIVEGDNVSDSQADVLAHDIAHKIESEAQYPGQIKVSIVREKRSVAYAK.

Residues 3 to 23 form a helical membrane-spanning segment; that stretch reads IVINLFLLVPASIVFFAAGFF. The disordered stretch occupies residues 96–127; it reads QQREGQLKKQAQDNRDMERRLQDQRKENEQVQ. Basic and acidic residues predominate over residues 100–124; the sequence is GQLKKQAQDNRDMERRLQDQRKENE. In terms of domain architecture, KH spans 214-280; the sequence is ALSVVHIQTD…KLTLQKLLSE (67 aa). One can recognise an HD domain in the interval 340–432; sequence LLQHSREVAM…VDAANVISLS (93 aa).

Belongs to the RNase Y family.

Its subcellular location is the cell membrane. Endoribonuclease that initiates mRNA decay. This is Ribonuclease Y from Chlorobium phaeovibrioides (strain DSM 265 / 1930) (Prosthecochloris vibrioformis (strain DSM 265)).